Here is a 64-residue protein sequence, read N- to C-terminus: Disintegrin VA6 (64 aa).

In terms of domain architecture, Disintegrin spans 1–64 (NSANPCCDPV…SDCPRNPYKS (64 aa)). Intrachain disulfides connect cysteine 6–cysteine 29, cysteine 20–cysteine 26, cysteine 25–cysteine 50, and cysteine 38–cysteine 57. The Cell attachment site motif lies at 42-44 (RGD).

It belongs to the venom metalloproteinase (M12B) family. P-II subfamily. P-IId sub-subfamily. In terms of assembly, homodimer; disulfide-linked. As to expression, expressed by the venom gland.

The protein localises to the secreted. Poor inhibitor of platelet aggregation. The disintegrin inhibits the adhesion of cells expressing the RGD-dependent integrin alpha-5/beta-1 (ITGA5/ITGB1) to immobilized fibronectin. Inhibition on alpha-IIb/beta-3 (ITGA2B/ITGB3) is low, and there is no inhibition on alpha-1/beta-1 (ITGA1/ITGB1), alpha-2/beta-1 (ITGA2/ITGB1) and alpha-6/beta-1 (ITGA6/ITGB1). The protein is Disintegrin VA6 of Vipera ammodytes ammodytes (Western sand viper).